A 157-amino-acid polypeptide reads, in one-letter code: uncharacterized protein (157 aa).

The segment covering 1 to 11 (MGDLEGQDRPD) has biased composition (basic and acidic residues). The tract at residues 1–22 (MGDLEGQDRPDPISTMVGPSGT) is disordered.

It is found in the mitochondrion. This is an uncharacterized protein from Arabidopsis thaliana (Mouse-ear cress).